The chain runs to 67 residues: Tachystatin-A2 (67 aa).

An N-terminal signal peptide occupies residues 1 to 23; sequence MKLQNTLILIGCLFLMGAMIGDA. 3 cysteine pairs are disulfide-bonded: cysteine 27–cysteine 47, cysteine 34–cysteine 52, and cysteine 46–cysteine 64.

As to expression, granular hemocytes, small secretory granules.

The protein resides in the secreted. Functionally, exhibits stronger antimicrobial activity against the Gram-positive bacteria (S.aureus (IC(50)=4.2 ug/ml)) and fungi (C.albicans (IC(50)=3.0 ug/ml) and P.pastoris (IC(50)=0.5 ug/ml)) than Gram-negative bacteria (E.coli (IC(50)=25 ug/ml)). Binds to chitin (8.4 uM are required to obtain 50% of binding). Does not cause hemolysis on sheep erythrocytes. Has no blocking activity on the P-type calcium channel. Has also been shown to weakly inhibit Kv1.2/KCNA2 voltage-gated potassium channels and TRPV1 receptors. This is Tachystatin-A2 from Tachypleus tridentatus (Japanese horseshoe crab).